A 532-amino-acid chain; its full sequence is Intercellular adhesion molecule 1 (532 aa).

The N-terminal stretch at 1 to 27 (MAPSSPRPALPALLVLLGALFPGPGNA) is a signal peptide. The Extracellular portion of the chain corresponds to 28-480 (QTSVSPPKVI…TVNVLSPRYE (453 aa)). Ig-like C2-type domains are found at residues 41-103 (GGSV…QSTA) and 128-193 (GKDL…LDLR). 3 disulfides stabilise this stretch: C48-C92, C52-C96, and C135-C186. The Cell attachment site; atypical signature appears at 152–154 (RGE). 2 N-linked (GlcNAc...) asparagine glycosylation sites follow: N202 and N267. 2 consecutive Ig-like C2-type domains span residues 230 to 297 (DTQG…LGTQ) and 325 to 378 (GTEV…LEVA). 2 disulfides stabilise this stretch: C237–C290 and C332–C371. N385 and N406 each carry an N-linked (GlcNAc...) asparagine glycan. 3 cysteine pairs are disulfide-bonded: C403-C419, C419-C457, and C431-C457. The Ig-like C2-type 5 domain occupies 412–464 (NSQQTPMCQAWGNPLPELKCLKDGTFPLPVGESVTVTRDLEGTYLCRARSTQG). A helical transmembrane segment spans residues 481–503 (FVIIAVVAAAVIMGTAGLSTYLY). Topologically, residues 504–532 (NRQRKIRKYRLQQAQKGTPMKPNTQATPP) are cytoplasmic. Phosphothreonine is present on residues T521 and T530.

The protein belongs to the immunoglobulin superfamily. ICAM family. In terms of assembly, homodimer. Interacts with MUC1 and promotes cell aggregation in epithelial cells. Interacts with ARHGEF26/SGEF. Interacts (on T cell side) with CD81, CD247 and CD9 at immunological synapses between antigen-presenting cells and T cells. In terms of processing, monoubiquitinated, which is promoted by MARCH9 and leads to endocytosis.

It localises to the membrane. Functionally, ICAM proteins are ligands for the leukocyte adhesion protein LFA-1 (integrin alpha-L/beta-2). During leukocyte trans-endothelial migration, ICAM1 engagement promotes the assembly of endothelial apical cups through ARHGEF26/SGEF and RHOG activation. The polypeptide is Intercellular adhesion molecule 1 (ICAM1) (Gorilla gorilla gorilla (Western lowland gorilla)).